The following is a 154-amino-acid chain: MVKAVAVLRGSAGVSGVVTLEQASEQDPTTITYEIAGNDPNAERGFHIHEFGDVTNGCVSAGPHFNPFKKTHGAPQDENRHVGDLGNIKTDAQGVAKGVITDSLVKLIGPTSVVGRSVVVHAGTDDLGKGGNEESLKTGNAGPRPACGVIGLTN.

Residues His47, His49, and His64 each contribute to the Cu cation site. A disulfide bond links Cys58 and Cys147. 4 residues coordinate Zn(2+): His64, His72, His81, and Asp84. Residue His121 participates in Cu cation binding. The span at 125 to 136 (DDLGKGGNEESL) shows a compositional bias: basic and acidic residues. The interval 125-144 (DDLGKGGNEESLKTGNAGPR) is disordered. Arg144 serves as a coordination point for substrate.

This sequence belongs to the Cu-Zn superoxide dismutase family. In terms of assembly, homodimer. The cofactor is Cu cation. It depends on Zn(2+) as a cofactor.

Its subcellular location is the cytoplasm. It carries out the reaction 2 superoxide + 2 H(+) = H2O2 + O2. Functionally, destroys radicals which are normally produced within the cells and which are toxic to biological systems. This Candida glabrata (strain ATCC 2001 / BCRC 20586 / JCM 3761 / NBRC 0622 / NRRL Y-65 / CBS 138) (Yeast) protein is Superoxide dismutase [Cu-Zn] (SOD1).